A 472-amino-acid chain; its full sequence is Zinc finger and BTB domain-containing protein 18.2 (472 aa).

Residues 24-91 (CDCTVLVGEA…MYEGKLEFSN (68 aa)) enclose the BTB domain. A compositionally biased stretch (basic and acidic residues) spans 127–149 (KIIDDGEKDDKPVDSEEHHEHSF). 3 disordered regions span residues 127–155 (KIID…SQQK), 197–236 (AGKT…FKPM), and 269–334 (DLLS…LSTS). Residues 205-215 (SSPSSPLSQRS) show a composition bias toward low complexity. The segment covering 279–288 (AKSPKSQQVG) has biased composition (polar residues). The segment covering 309–319 (HTREDDLYQDR) has biased composition (basic and acidic residues). C2H2-type zinc fingers lie at residues 344–366 (CICP…LSSH), 384–406 (PTCT…ERTH), 412–434 (FTCG…AVVH), and 440–463 (HACK…RKFH).

This sequence belongs to the krueppel C2H2-type zinc-finger protein family. ZBTB18 subfamily.

The protein localises to the nucleus. Transcriptional repressor that plays a role in various developmental processes. Specifically binds the consensus DNA sequence 5'-[AC]ACATCTG[GT][AC]-3' which contains the E box core, and acts by recruiting chromatin remodeling multiprotein complexes. The chain is Zinc finger and BTB domain-containing protein 18.2 (zbtb18.2) from Xenopus laevis (African clawed frog).